A 109-amino-acid polypeptide reads, in one-letter code: ATP synthase subunit c (109 aa).

The next 2 membrane-spanning stretches (helical) occupy residues 42 to 62 (YIGTGITMLAAGAVGLMQGFS) and 88 to 108 (LALAEAVAIYALIVSILIIFV).

It belongs to the ATPase C chain family. As to quaternary structure, F-type ATPases have 2 components, F(1) - the catalytic core - and F(0) - the membrane proton channel. F(1) has five subunits: alpha(3), beta(3), gamma(1), delta(1), epsilon(1). F(0) has three main subunits: a(1), b(2) and c(10-14). The alpha and beta chains form an alternating ring which encloses part of the gamma chain. F(1) is attached to F(0) by a central stalk formed by the gamma and epsilon chains, while a peripheral stalk is formed by the delta and b chains.

It localises to the cell membrane. Its function is as follows. F(1)F(0) ATP synthase produces ATP from ADP in the presence of a proton or sodium gradient. F-type ATPases consist of two structural domains, F(1) containing the extramembraneous catalytic core and F(0) containing the membrane proton channel, linked together by a central stalk and a peripheral stalk. During catalysis, ATP synthesis in the catalytic domain of F(1) is coupled via a rotary mechanism of the central stalk subunits to proton translocation. In terms of biological role, key component of the F(0) channel; it plays a direct role in translocation across the membrane. A homomeric c-ring of between 10-14 subunits forms the central stalk rotor element with the F(1) delta and epsilon subunits. This chain is ATP synthase subunit c, found in Ureaplasma parvum serovar 3 (strain ATCC 27815 / 27 / NCTC 11736).